We begin with the raw amino-acid sequence, 701 residues long: Potassium-transporting ATPase ATP-binding subunit 1 (701 aa).

Residues 1–26 (MNPVAPTRKVKPPRNRPSDRRQARKK) are disordered. 4 helical membrane-spanning segments follow: residues 57–77 (MFVVWVATLVTLAVTINPDLF), 90–110 (GLLTGILFFTVWFANFAEAVA), 241–261 (VALTVLLAVLSLVFLFVIATL), and 278–298 (IALLVALIPTTIGGLLSAIGI). Aspartate 329 functions as the 4-aspartylphosphate intermediate in the catalytic mechanism. Residues aspartate 366, glutamate 370, 397–404 (FSAKTRMS), and lysine 416 contribute to the ATP site. Residues aspartate 539 and aspartate 543 each contribute to the Mg(2+) site. A run of 3 helical transmembrane segments spans residues 599 to 619 (FSIANDIAKYFAIIPVIFAAA), 635 to 655 (AVLSALIYNALIIPALIPLAL), and 681 to 701 (VIAPFIAIKLIDILITLVGLA).

Belongs to the cation transport ATPase (P-type) (TC 3.A.3) family. Type IA subfamily. As to quaternary structure, the system is composed of three essential subunits: KdpA, KdpB and KdpC.

The protein resides in the cell inner membrane. It catalyses the reaction K(+)(out) + ATP + H2O = K(+)(in) + ADP + phosphate + H(+). Its function is as follows. Part of the high-affinity ATP-driven potassium transport (or Kdp) system, which catalyzes the hydrolysis of ATP coupled with the electrogenic transport of potassium into the cytoplasm. This subunit is responsible for energy coupling to the transport system and for the release of the potassium ions to the cytoplasm. The chain is Potassium-transporting ATPase ATP-binding subunit 1 from Nostoc sp. (strain PCC 7120 / SAG 25.82 / UTEX 2576).